Here is a 564-residue protein sequence, read N- to C-terminus: Ribulokinase (564 aa).

This sequence belongs to the ribulokinase family.

The enzyme catalyses D-ribulose + ATP = D-ribulose 5-phosphate + ADP + H(+). It carries out the reaction L-ribulose + ATP = L-ribulose 5-phosphate + ADP + H(+). It functions in the pathway carbohydrate degradation; L-arabinose degradation via L-ribulose; D-xylulose 5-phosphate from L-arabinose (bacterial route): step 2/3. In Anoxybacillus flavithermus (strain DSM 21510 / WK1), this protein is Ribulokinase.